The primary structure comprises 299 residues: Recombination-associated protein RdgC (299 aa).

This sequence belongs to the RdgC family.

The protein resides in the cytoplasm. It is found in the nucleoid. May be involved in recombination. The protein is Recombination-associated protein RdgC of Bordetella bronchiseptica (strain ATCC BAA-588 / NCTC 13252 / RB50) (Alcaligenes bronchisepticus).